Consider the following 243-residue polypeptide: NAD-dependent protein deacetylase (243 aa).

Residues Met-1 to Glu-243 enclose the Deacetylase sirtuin-type domain. Positions 24, 35, 36, 105, 107, 108, and 123 each coordinate NAD(+). Position 35 (Phe-35) interacts with nicotinamide. The nicotinamide site is built by Ile-107 and Asp-108. The active-site Proton acceptor is the His-123. The Zn(2+) site is built by Cys-131, Cys-134, Cys-151, and Cys-154. NAD(+) contacts are provided by Ser-192, Ser-193, Asn-215, and Asp-232.

It belongs to the sirtuin family. Class U subfamily. Requires Zn(2+) as cofactor.

Its subcellular location is the cytoplasm. It catalyses the reaction N(6)-acetyl-L-lysyl-[protein] + NAD(+) + H2O = 2''-O-acetyl-ADP-D-ribose + nicotinamide + L-lysyl-[protein]. In terms of biological role, NAD-dependent protein deacetylase which modulates the activities of several enzymes which are inactive in their acetylated form. This chain is NAD-dependent protein deacetylase, found in Staphylococcus aureus (strain COL).